The sequence spans 613 residues: MATIPDWKLQLLARRRQEEASVRGREKAERERLSQMPAWKRGLLERRRAKLGLSPGEPSPVPGTAEAGPPDPDESSVLLEAIGPVHQNRFIRQERQQQQQQQQRSEELLAERKPVPLEARERRPSPGEMRDQSPKGRESREERLSPRETRERRLGIGGAQESSLRPLEARDWRQSPGEVGDRSSRLSEPWKWRLSPGETPERSLRLAESREQSPRRKEVESRLSPGESAYQKLGLTEAHKWRPDSRESQEQSLVQLEATEWRLRSGEERQGYSEKCGRKEEWPVPGVAPEETTELSETLTREAQGSSSTGMEAAEQRPVEDGERGMKPAEGWKWTLNSGKAREWTPRDIEAQTQKPEPSESAEKRLESPSVEAGEGEAEKEEAGAQGRPLRALQNCCSVPSPLPPEDAGTGGLRQQEEEAVELQPPPPAPLSPPPPAPTAPQPPGDPLMSRLFYGVKAGPGVGAPRRSGHTFTVNPRRSVPPTTPATPTSPATADAAVPGAGKKRYPTAEEILVLGGYLRLSRSCLAKGSPERHHKQLKISFSETALETTYQYPSESSVLEELGPEPEVPSAPNPPAAQPDDEEDEEELLLLQPELQGGLRTKALIVDESCRR.

Basic and acidic residues predominate over residues 15–33 (RRQEEASVRGREKAERERL). 2 disordered regions span residues 15–231 (RRQE…SAYQ) and 266–505 (GEER…GKKR). Phosphoserine occurs at positions 54, 125, 133, 175, and 195. 2 stretches are compositionally biased toward basic and acidic residues: residues 104 to 154 (RSEE…ERRL) and 167 to 191 (LEARDWRQSPGEVGDRSSRLSEPWK). The residue at position 199 (threonine 199) is a Phosphothreonine. Positions 199–221 (TPERSLRLAESREQSPRRKEVES) are enriched in basic and acidic residues. Phosphoserine is present on serine 224. Residues 266–282 (GEERQGYSEKCGRKEEW) are compositionally biased toward basic and acidic residues. The segment covering 301 to 310 (REAQGSSSTG) has biased composition (polar residues). Basic and acidic residues-rich tracts occupy residues 314–327 (AEQRPVEDGERGMK), 340–350 (KAREWTPRDIE), and 357–367 (EPSESAEKRLE). Phosphoserine is present on residues serine 368 and serine 432. Residues 424–446 (QPPPPAPLSPPPPAPTAPQPPGD) are compositionally biased toward pro residues. An N6-acetyllysine modification is found at lysine 457. Residues 476–499 (PRRSVPPTTPATPTSPATADAAVP) are compositionally biased toward low complexity. A phosphoserine mark is found at serine 490 and serine 530. Positions 552 to 594 (QYPSESSVLEELGPEPEVPSAPNPPAAQPDDEEDEEELLLLQP) are disordered. Pro residues predominate over residues 567–578 (PEVPSAPNPPAA). Acidic residues predominate over residues 580 to 589 (PDDEEDEEEL).

In terms of assembly, interacts with Protein phosphatase 1 (PP1).

Its subcellular location is the cytoplasm. The protein localises to the cytoskeleton. In terms of biological role, may target protein phosphatase 1 to F-actin cytoskeleton. In Macaca mulatta (Rhesus macaque), this protein is Phostensin (PPP1R18).